Here is a 298-residue protein sequence, read N- to C-terminus: Lactose transport system permease protein LacF (298 aa).

Helical transmembrane passes span 17-37 (GWLF…YPIL), 77-97 (VIFF…LAAM), 112-132 (MIFL…KSMF), 151-171 (PIGW…AITW), 208-228 (AFLT…TSTI), and 269-289 (FSYA…LSFL). The 218-residue stretch at 73–290 (LQNTVIFFVV…LMVAVLSFLQ (218 aa)) folds into the ABC transmembrane type-1 domain.

It belongs to the binding-protein-dependent transport system permease family. MalFG subfamily.

The protein resides in the cell inner membrane. Functionally, part of the binding-protein-dependent transport system for lactose. Probably responsible for the translocation of the substrate across the membrane. The protein is Lactose transport system permease protein LacF (lacF) of Rhizobium radiobacter (Agrobacterium tumefaciens).